Reading from the N-terminus, the 227-residue chain is Arginine ABC transporter permease protein ArtM (227 aa).

The ABC transmembrane type-1 domain occupies 13–209 (IPTSLLLTVV…IITGIATLLL (197 aa)). Helical transmembrane passes span 17-37 (LLLT…LTFL), 51-71 (LYLT…IYAG), 78-98 (IIDS…ALAL), 155-175 (IILV…DIMG), and 188-208 (LTIY…ATLL).

Belongs to the binding-protein-dependent transport system permease family. HisMQ subfamily. The complex is composed of two ATP-binding proteins (ArtP), two transmembrane proteins (ArtM and ArtQ) and a solute-binding protein (ArtI).

It localises to the cell inner membrane. Functionally, part of the ABC transporter complex ArtPIQM involved in arginine transport. Probably responsible for the translocation of the substrate across the membrane. This Haemophilus influenzae (strain ATCC 51907 / DSM 11121 / KW20 / Rd) protein is Arginine ABC transporter permease protein ArtM (artM).